We begin with the raw amino-acid sequence, 349 residues long: Nicotinate-nucleotide--dimethylbenzimidazole phosphoribosyltransferase (349 aa).

The active-site Proton acceptor is Glu-316.

Belongs to the CobT family.

The catalysed reaction is 5,6-dimethylbenzimidazole + nicotinate beta-D-ribonucleotide = alpha-ribazole 5'-phosphate + nicotinate + H(+). The protein operates within nucleoside biosynthesis; alpha-ribazole biosynthesis; alpha-ribazole from 5,6-dimethylbenzimidazole: step 1/2. Its function is as follows. Catalyzes the synthesis of alpha-ribazole-5'-phosphate from nicotinate mononucleotide (NAMN) and 5,6-dimethylbenzimidazole (DMB). This is Nicotinate-nucleotide--dimethylbenzimidazole phosphoribosyltransferase from Photorhabdus laumondii subsp. laumondii (strain DSM 15139 / CIP 105565 / TT01) (Photorhabdus luminescens subsp. laumondii).